Reading from the N-terminus, the 300-residue chain is Ribosomal protein L11 methyltransferase (300 aa).

Residues Thr-152, Gly-173, Asp-195, and Asn-234 each coordinate S-adenosyl-L-methionine.

This sequence belongs to the methyltransferase superfamily. PrmA family.

It is found in the cytoplasm. The catalysed reaction is L-lysyl-[protein] + 3 S-adenosyl-L-methionine = N(6),N(6),N(6)-trimethyl-L-lysyl-[protein] + 3 S-adenosyl-L-homocysteine + 3 H(+). Functionally, methylates ribosomal protein L11. This chain is Ribosomal protein L11 methyltransferase, found in Burkholderia thailandensis (strain ATCC 700388 / DSM 13276 / CCUG 48851 / CIP 106301 / E264).